The primary structure comprises 241 residues: Leucyl/phenylalanyl-tRNA--protein transferase (241 aa).

It belongs to the L/F-transferase family.

The protein localises to the cytoplasm. The catalysed reaction is N-terminal L-lysyl-[protein] + L-leucyl-tRNA(Leu) = N-terminal L-leucyl-L-lysyl-[protein] + tRNA(Leu) + H(+). It catalyses the reaction N-terminal L-arginyl-[protein] + L-leucyl-tRNA(Leu) = N-terminal L-leucyl-L-arginyl-[protein] + tRNA(Leu) + H(+). The enzyme catalyses L-phenylalanyl-tRNA(Phe) + an N-terminal L-alpha-aminoacyl-[protein] = an N-terminal L-phenylalanyl-L-alpha-aminoacyl-[protein] + tRNA(Phe). In terms of biological role, functions in the N-end rule pathway of protein degradation where it conjugates Leu, Phe and, less efficiently, Met from aminoacyl-tRNAs to the N-termini of proteins containing an N-terminal arginine or lysine. The chain is Leucyl/phenylalanyl-tRNA--protein transferase from Neisseria meningitidis serogroup C (strain 053442).